Here is a 99-residue protein sequence, read N- to C-terminus: Large ribosomal subunit protein uL23 (99 aa).

The protein belongs to the universal ribosomal protein uL23 family. In terms of assembly, part of the 50S ribosomal subunit. Contacts protein L29, and trigger factor when it is bound to the ribosome.

In terms of biological role, one of the early assembly proteins it binds 23S rRNA. One of the proteins that surrounds the polypeptide exit tunnel on the outside of the ribosome. Forms the main docking site for trigger factor binding to the ribosome. The polypeptide is Large ribosomal subunit protein uL23 (Leifsonia xyli subsp. xyli (strain CTCB07)).